The primary structure comprises 661 residues: UvrABC system protein B (661 aa).

Residues 24–209 (NGLNKGYRFQ…IFPSYQDEGI (186 aa)) form the Helicase ATP-binding domain. 37-44 (GVTGSGKT) serves as a coordination point for ATP. The Beta-hairpin motif lies at 90-113 (YYDYYQPEAYVPTKDLYIEKSADI). Residues 430–594 (DLVNEIVQVK…IIKPLMEDIF (165 aa)) enclose the Helicase C-terminal domain. The 36-residue stretch at 622–657 (EEYAALLEEEMYKAASELRYEDAARLRDELFKIKEE) folds into the UVR domain.

This sequence belongs to the UvrB family. As to quaternary structure, forms a heterotetramer with UvrA during the search for lesions. Interacts with UvrC in an incision complex.

It localises to the cytoplasm. The UvrABC repair system catalyzes the recognition and processing of DNA lesions. A damage recognition complex composed of 2 UvrA and 2 UvrB subunits scans DNA for abnormalities. Upon binding of the UvrA(2)B(2) complex to a putative damaged site, the DNA wraps around one UvrB monomer. DNA wrap is dependent on ATP binding by UvrB and probably causes local melting of the DNA helix, facilitating insertion of UvrB beta-hairpin between the DNA strands. Then UvrB probes one DNA strand for the presence of a lesion. If a lesion is found the UvrA subunits dissociate and the UvrB-DNA preincision complex is formed. This complex is subsequently bound by UvrC and the second UvrB is released. If no lesion is found, the DNA wraps around the other UvrB subunit that will check the other stand for damage. The sequence is that of UvrABC system protein B from Fervidobacterium nodosum (strain ATCC 35602 / DSM 5306 / Rt17-B1).